Reading from the N-terminus, the 63-residue chain is Large ribosomal subunit protein bL35 (63 aa).

Basic residues predominate over residues 1–43 (MKMRTHSGAKKRLKVLSSGKVKKKSTRMRHLNSHMSSKTKRQL). The interval 1–45 (MKMRTHSGAKKRLKVLSSGKVKKKSTRMRHLNSHMSSKTKRQLGK) is disordered.

Belongs to the bacterial ribosomal protein bL35 family.

The chain is Large ribosomal subunit protein bL35 from Bdellovibrio bacteriovorus (strain ATCC 15356 / DSM 50701 / NCIMB 9529 / HD100).